Consider the following 122-residue polypeptide: uncharacterized protein (122 aa).

The segment covering 79–90 (NERVTSRVTNSR) has biased composition (polar residues). Positions 79 to 122 (NERVTSRVTNSRTESESNGNGNATGNTSSNANSNGNANGIYIRK) are disordered. A compositionally biased stretch (low complexity) spans 94–122 (ESNGNGNATGNTSSNANSNGNANGIYIRK).

This is an uncharacterized protein from Leptolyngbya boryana (Plectonema boryanum).